We begin with the raw amino-acid sequence, 334 residues long: Holliday junction branch migration complex subunit RuvB (334 aa).

The large ATPase domain (RuvB-L) stretch occupies residues 1-182 (MDERLVSSEA…FGVLSRLEYY (182 aa)). ATP-binding positions include Leu21, Arg22, Gly63, Lys66, Thr67, Thr68, 129–131 (EDF), Arg172, Tyr182, and Arg219. Residue Thr67 coordinates Mg(2+). Residues 183–253 (TQEELTDIVS…IAHDALERLQ (71 aa)) form a small ATPAse domain (RuvB-S) region. Residues 256 to 334 (ALGLDHIDHK…HFRLEAPARD (79 aa)) form a head domain (RuvB-H) region. 2 residues coordinate DNA: Arg311 and Arg316.

The protein belongs to the RuvB family. As to quaternary structure, homohexamer. Forms an RuvA(8)-RuvB(12)-Holliday junction (HJ) complex. HJ DNA is sandwiched between 2 RuvA tetramers; dsDNA enters through RuvA and exits via RuvB. An RuvB hexamer assembles on each DNA strand where it exits the tetramer. Each RuvB hexamer is contacted by two RuvA subunits (via domain III) on 2 adjacent RuvB subunits; this complex drives branch migration. In the full resolvosome a probable DNA-RuvA(4)-RuvB(12)-RuvC(2) complex forms which resolves the HJ.

It is found in the cytoplasm. The enzyme catalyses ATP + H2O = ADP + phosphate + H(+). In terms of biological role, the RuvA-RuvB-RuvC complex processes Holliday junction (HJ) DNA during genetic recombination and DNA repair, while the RuvA-RuvB complex plays an important role in the rescue of blocked DNA replication forks via replication fork reversal (RFR). RuvA specifically binds to HJ cruciform DNA, conferring on it an open structure. The RuvB hexamer acts as an ATP-dependent pump, pulling dsDNA into and through the RuvAB complex. RuvB forms 2 homohexamers on either side of HJ DNA bound by 1 or 2 RuvA tetramers; 4 subunits per hexamer contact DNA at a time. Coordinated motions by a converter formed by DNA-disengaged RuvB subunits stimulates ATP hydrolysis and nucleotide exchange. Immobilization of the converter enables RuvB to convert the ATP-contained energy into a lever motion, pulling 2 nucleotides of DNA out of the RuvA tetramer per ATP hydrolyzed, thus driving DNA branch migration. The RuvB motors rotate together with the DNA substrate, which together with the progressing nucleotide cycle form the mechanistic basis for DNA recombination by continuous HJ branch migration. Branch migration allows RuvC to scan DNA until it finds its consensus sequence, where it cleaves and resolves cruciform DNA. The protein is Holliday junction branch migration complex subunit RuvB of Bacillus velezensis (strain DSM 23117 / BGSC 10A6 / LMG 26770 / FZB42) (Bacillus amyloliquefaciens subsp. plantarum).